We begin with the raw amino-acid sequence, 54 residues long: Lectin alpha-1 chain (54 aa).

This sequence belongs to the leguminous lectin family. In terms of assembly, tetramer of two alpha and two beta chains.

The protein is Lectin alpha-1 chain of Lathyrus cicera (Flat-pod pea).